The primary structure comprises 1117 residues: DNA polymerase II large subunit (1117 aa).

Residues 279-294 (STKEEEKKKEESSENK) are compositionally biased toward basic and acidic residues. Residues 279-299 (STKEEEKKKEESSENKPKKKA) form a disordered region.

The protein belongs to the archaeal DNA polymerase II family. Heterodimer of a large subunit and a small subunit.

The catalysed reaction is DNA(n) + a 2'-deoxyribonucleoside 5'-triphosphate = DNA(n+1) + diphosphate. It catalyses the reaction Exonucleolytic cleavage in the 3'- to 5'-direction to yield nucleoside 5'-phosphates.. Its function is as follows. Possesses two activities: a DNA synthesis (polymerase) and an exonucleolytic activity that degrades single-stranded DNA in the 3'- to 5'-direction. Has a template-primer preference which is characteristic of a replicative DNA polymerase. In Methanosphaera stadtmanae (strain ATCC 43021 / DSM 3091 / JCM 11832 / MCB-3), this protein is DNA polymerase II large subunit.